A 324-amino-acid chain; its full sequence is UDP-N-acetylenolpyruvoylglucosamine reductase (324 aa).

One can recognise an FAD-binding PCMH-type domain in the interval 36 to 203; sequence FRAGGLAELM…TSVLFEGYPE (168 aa). Arg-183 is a catalytic residue. The Proton donor role is filled by Ser-232. Glu-302 is an active-site residue.

Belongs to the MurB family. Requires FAD as cofactor.

The protein resides in the cytoplasm. It catalyses the reaction UDP-N-acetyl-alpha-D-muramate + NADP(+) = UDP-N-acetyl-3-O-(1-carboxyvinyl)-alpha-D-glucosamine + NADPH + H(+). It functions in the pathway cell wall biogenesis; peptidoglycan biosynthesis. Functionally, cell wall formation. This Rhizobium etli (strain CIAT 652) protein is UDP-N-acetylenolpyruvoylglucosamine reductase.